Here is a 372-residue protein sequence, read N- to C-terminus: Protein RecA (372 aa).

77-84 serves as a coordination point for ATP; the sequence is GPESSGKT.

It belongs to the RecA family.

The protein resides in the cytoplasm. Functionally, can catalyze the hydrolysis of ATP in the presence of single-stranded DNA, the ATP-dependent uptake of single-stranded DNA by duplex DNA, and the ATP-dependent hybridization of homologous single-stranded DNAs. It interacts with LexA causing its activation and leading to its autocatalytic cleavage. The protein is Protein RecA of Corynebacterium diphtheriae (strain ATCC 700971 / NCTC 13129 / Biotype gravis).